A 274-amino-acid chain; its full sequence is Orotidine 5'-phosphate decarboxylase (274 aa).

Substrate is bound by residues Asp-40, 62–64 (KTH), 93–102 (DRKFIDIGNT), Tyr-227, and Arg-245. Lys-95 (proton donor) is an active-site residue.

The protein belongs to the OMP decarboxylase family.

It carries out the reaction orotidine 5'-phosphate + H(+) = UMP + CO2. It participates in pyrimidine metabolism; UMP biosynthesis via de novo pathway; UMP from orotate: step 2/2. This chain is Orotidine 5'-phosphate decarboxylase (pyrG), found in Emericella nidulans (strain FGSC A4 / ATCC 38163 / CBS 112.46 / NRRL 194 / M139) (Aspergillus nidulans).